Consider the following 354-residue polypeptide: UDP-N-acetylglucosamine--N-acetylmuramyl-(pentapeptide) pyrophosphoryl-undecaprenol N-acetylglucosamine transferase (354 aa).

UDP-N-acetyl-alpha-D-glucosamine-binding positions include 12–14 (TGG), Asn124, Arg163, Ser187, Ile240, and Gln285.

Belongs to the glycosyltransferase 28 family. MurG subfamily.

The protein localises to the cell inner membrane. It catalyses the reaction di-trans,octa-cis-undecaprenyl diphospho-N-acetyl-alpha-D-muramoyl-L-alanyl-D-glutamyl-meso-2,6-diaminopimeloyl-D-alanyl-D-alanine + UDP-N-acetyl-alpha-D-glucosamine = di-trans,octa-cis-undecaprenyl diphospho-[N-acetyl-alpha-D-glucosaminyl-(1-&gt;4)]-N-acetyl-alpha-D-muramoyl-L-alanyl-D-glutamyl-meso-2,6-diaminopimeloyl-D-alanyl-D-alanine + UDP + H(+). It participates in cell wall biogenesis; peptidoglycan biosynthesis. In terms of biological role, cell wall formation. Catalyzes the transfer of a GlcNAc subunit on undecaprenyl-pyrophosphoryl-MurNAc-pentapeptide (lipid intermediate I) to form undecaprenyl-pyrophosphoryl-MurNAc-(pentapeptide)GlcNAc (lipid intermediate II). In Methylococcus capsulatus (strain ATCC 33009 / NCIMB 11132 / Bath), this protein is UDP-N-acetylglucosamine--N-acetylmuramyl-(pentapeptide) pyrophosphoryl-undecaprenol N-acetylglucosamine transferase.